The following is a 236-amino-acid chain: Protein-L-isoaspartate O-methyltransferase 1 (236 aa).

The active site involves Ser-85.

Belongs to the methyltransferase superfamily. L-isoaspartyl/D-aspartyl protein methyltransferase family.

It localises to the cytoplasm. It catalyses the reaction [protein]-L-isoaspartate + S-adenosyl-L-methionine = [protein]-L-isoaspartate alpha-methyl ester + S-adenosyl-L-homocysteine. Catalyzes the methyl esterification of L-isoaspartyl residues in peptides and proteins that result from spontaneous decomposition of normal L-aspartyl and L-asparaginyl residues. It plays a role in the repair and/or degradation of damaged proteins. The polypeptide is Protein-L-isoaspartate O-methyltransferase 1 (Polaromonas sp. (strain JS666 / ATCC BAA-500)).